Here is a 165-residue protein sequence, read N- to C-terminus: Neurotrophin-3 (165 aa).

The N-terminal stretch at 1 to 3 is a signal peptide; that stretch reads IQS. The propeptide occupies 4–119; sequence TSMDQGSLSE…VLTXTSXXXR (116 aa).

The protein belongs to the NGF-beta family.

It is found in the secreted. Functionally, seems to promote the survival of visceral and proprioceptive sensory neurons. The polypeptide is Neurotrophin-3 (NTF3) (Tropidophis haetianus (Haitian dwarf boa)).